The sequence spans 245 residues: MDKNELVQKAKLAEQAERYDDMAACMKRVTEEGGELSNEERNLLSVAYKNVVGARRSSWRVVSSIEQKTEGAEKKQEMSREYREKIEAELREICNDVLNLLDKFLIANASQPESKVFYLKMKGDYYRYLAEVASGDAKADIVAQSQKAYQDAFDISKTEMQPTHPIRLGLALNFSVFYYEILNCPEKACSLAKAAFDEAIAELDTLSEESYKDSTLIMQLLRDNLTLWTSDTQGDEAEQGEGGEN.

It belongs to the 14-3-3 family. In terms of assembly, homodimer.

The protein localises to the cytoplasm. Adapter protein implicated in the regulation of a large spectrum of both general and specialized signaling pathways. Binds to a large number of partners, usually by recognition of a phosphoserine or phosphothreonine motif. Binding generally results in the modulation of the activity of the binding partner. The polypeptide is 14-3-3 protein zeta (ywhaz) (Xenopus tropicalis (Western clawed frog)).